A 469-amino-acid polypeptide reads, in one-letter code: Phenylalanine--tRNA ligase, mitochondrial (469 aa).

A mitochondrion-targeting transit peptide spans 1-17; that stretch reads MFLNRMMKTRTGLYRLY. Substrate-binding positions include 126-129, R155, 162-164, 169-171, E302, and F329; these read SAHE, THY, and QME. Positions 372 to 469 constitute an FDX-ACB domain; that stretch reads SKHPGSFRDV…LVKEYSVELR (98 aa).

Belongs to the class-II aminoacyl-tRNA synthetase family. As to quaternary structure, monomer.

Its subcellular location is the mitochondrion matrix. The catalysed reaction is tRNA(Phe) + L-phenylalanine + ATP = L-phenylalanyl-tRNA(Phe) + AMP + diphosphate + H(+). In terms of biological role, is responsible for the charging of tRNA(Phe) with phenylalanine in mitochondrial translation. This is Phenylalanine--tRNA ligase, mitochondrial (MSF1) from Saccharomyces cerevisiae (strain ATCC 204508 / S288c) (Baker's yeast).